The primary structure comprises 199 residues: Holliday junction branch migration complex subunit RuvA (199 aa).

Residues 1 to 64 (MIALLTGKLA…EDAINLYGFR (64 aa)) form a domain I region. Residues 65-143 (TQQEKELFQL…KLGLAQPQAG (79 aa)) form a domain II region. The flexible linker stretch occupies residues 144 to 148 (GTTAP). Positions 149 to 199 (AKQEIRDDVLSALINLGYKEAVVQKALAELKVTEDATVELVLKQALKILMK) are domain III.

This sequence belongs to the RuvA family. In terms of assembly, homotetramer. Forms an RuvA(8)-RuvB(12)-Holliday junction (HJ) complex. HJ DNA is sandwiched between 2 RuvA tetramers; dsDNA enters through RuvA and exits via RuvB. An RuvB hexamer assembles on each DNA strand where it exits the tetramer. Each RuvB hexamer is contacted by two RuvA subunits (via domain III) on 2 adjacent RuvB subunits; this complex drives branch migration. In the full resolvosome a probable DNA-RuvA(4)-RuvB(12)-RuvC(2) complex forms which resolves the HJ.

The protein resides in the cytoplasm. The RuvA-RuvB-RuvC complex processes Holliday junction (HJ) DNA during genetic recombination and DNA repair, while the RuvA-RuvB complex plays an important role in the rescue of blocked DNA replication forks via replication fork reversal (RFR). RuvA specifically binds to HJ cruciform DNA, conferring on it an open structure. The RuvB hexamer acts as an ATP-dependent pump, pulling dsDNA into and through the RuvAB complex. HJ branch migration allows RuvC to scan DNA until it finds its consensus sequence, where it cleaves and resolves the cruciform DNA. This is Holliday junction branch migration complex subunit RuvA from Citrifermentans bemidjiense (strain ATCC BAA-1014 / DSM 16622 / JCM 12645 / Bem) (Geobacter bemidjiensis).